The primary structure comprises 179 residues: Protein HoxT (179 aa).

This is Protein HoxT (hoxT) from Cupriavidus necator (strain ATCC 17699 / DSM 428 / KCTC 22496 / NCIMB 10442 / H16 / Stanier 337) (Ralstonia eutropha).